Consider the following 208-residue polypeptide: Small ribosomal subunit protein eS8 (208 aa).

The interval 1–27 is disordered; it reads MGISRDNWHKRRRTGGKRKPVHKKRKY. Positions 8 to 26 are enriched in basic residues; sequence WHKRRRTGGKRKPVHKKRK.

This sequence belongs to the eukaryotic ribosomal protein eS8 family. Component of the small ribosomal subunit. Identified in a IGF2BP1-dependent mRNP granule complex containing untranslated mRNAs. Part of the small subunit (SSU) processome, composed of more than 70 proteins and the RNA chaperone small nucleolar RNA (snoRNA) U3.

It localises to the cytoplasm. It is found in the membrane. Its subcellular location is the nucleus. The protein localises to the nucleolus. Its function is as follows. Component of the small ribosomal subunit. The ribosome is a large ribonucleoprotein complex responsible for the synthesis of proteins in the cell. Part of the small subunit (SSU) processome, first precursor of the small eukaryotic ribosomal subunit. During the assembly of the SSU processome in the nucleolus, many ribosome biogenesis factors, an RNA chaperone and ribosomal proteins associate with the nascent pre-rRNA and work in concert to generate RNA folding, modifications, rearrangements and cleavage as well as targeted degradation of pre-ribosomal RNA by the RNA exosome. The chain is Small ribosomal subunit protein eS8 (rps8) from Danio rerio (Zebrafish).